Reading from the N-terminus, the 502-residue chain is Probable cytosol aminopeptidase (502 aa).

The Mn(2+) site is built by lysine 265 and aspartate 270. Lysine 277 is a catalytic residue. Mn(2+)-binding residues include aspartate 288, aspartate 347, and glutamate 349. The active site involves arginine 351.

Belongs to the peptidase M17 family. Requires Mn(2+) as cofactor.

It localises to the cytoplasm. The catalysed reaction is Release of an N-terminal amino acid, Xaa-|-Yaa-, in which Xaa is preferably Leu, but may be other amino acids including Pro although not Arg or Lys, and Yaa may be Pro. Amino acid amides and methyl esters are also readily hydrolyzed, but rates on arylamides are exceedingly low.. It carries out the reaction Release of an N-terminal amino acid, preferentially leucine, but not glutamic or aspartic acids.. Functionally, presumably involved in the processing and regular turnover of intracellular proteins. Catalyzes the removal of unsubstituted N-terminal amino acids from various peptides. In Rickettsia bellii (strain OSU 85-389), this protein is Probable cytosol aminopeptidase.